Here is a 227-residue protein sequence, read N- to C-terminus: ATP synthase subunit a (227 aa).

Transmembrane regions (helical) follow at residues 16 to 36, 79 to 99, 105 to 125, 176 to 196, and 202 to 222; these read AFVY…VAYI, LVAT…IPGF, SLNL…FEGI, LFLL…AFAL, and VLQT…AVAI.

It belongs to the ATPase A chain family. F-type ATPases have 2 components, CF(1) - the catalytic core - and CF(0) - the membrane proton channel. CF(1) has five subunits: alpha(3), beta(3), gamma(1), delta(1), epsilon(1). CF(0) has three main subunits: a(1), b(2) and c(9-12). The alpha and beta chains form an alternating ring which encloses part of the gamma chain. CF(1) is attached to CF(0) by a central stalk formed by the gamma and epsilon chains, while a peripheral stalk is formed by the delta and b chains.

Its subcellular location is the cell inner membrane. In terms of biological role, key component of the proton channel; it plays a direct role in the translocation of protons across the membrane. This is ATP synthase subunit a from Campylobacter concisus (strain 13826).